Here is a 212-residue protein sequence, read N- to C-terminus: Methylthioribulose-1-phosphate dehydratase (212 aa).

H97 and H99 together coordinate Zn(2+).

Belongs to the aldolase class II family. MtnB subfamily. Homotetramer. Zn(2+) serves as cofactor.

The enzyme catalyses 5-(methylsulfanyl)-D-ribulose 1-phosphate = 5-methylsulfanyl-2,3-dioxopentyl phosphate + H2O. The protein operates within amino-acid biosynthesis; L-methionine biosynthesis via salvage pathway; L-methionine from S-methyl-5-thio-alpha-D-ribose 1-phosphate: step 2/6. Its function is as follows. Catalyzes the dehydration of methylthioribulose-1-phosphate (MTRu-1-P) into 2,3-diketo-5-methylthiopentyl-1-phosphate (DK-MTP-1-P). The protein is Methylthioribulose-1-phosphate dehydratase of Bacillus cytotoxicus (strain DSM 22905 / CIP 110041 / 391-98 / NVH 391-98).